The sequence spans 245 residues: Eukaryotic translation initiation factor 6 (245 aa).

Y113 carries the phosphotyrosine modification. The residue at position 165 (T165) is a Phosphothreonine. S166 is modified (phosphoserine). S174 and S175 each carry phosphoserine; by CK1. S235 is modified (phosphoserine; by PKC). A phosphoserine mark is found at S239 and S243.

It belongs to the eIF-6 family. As to quaternary structure, monomer. Associates with the 60S ribosomal subunit. Interacts with RACK1. Interacts with DICER1, AGO2, TARBP2, MOV10 and RPL7A; they form a large RNA-induced silencing complex (RISC). Post-translationally, phosphorylation at Ser-174 and Ser-175 by CSNK1D/CK1 promotes nuclear export. Ufmylated by UFL1. As to expression, expressed at very high levels in colon carcinoma with lower levels in normal colon and ileum and lowest levels in kidney and muscle (at protein level).

It localises to the cytoplasm. It is found in the nucleus. The protein resides in the nucleolus. Binds to the 60S ribosomal subunit and prevents its association with the 40S ribosomal subunit to form the 80S initiation complex in the cytoplasm. Behaves as a stimulatory translation initiation factor downstream insulin/growth factors. Is also involved in ribosome biogenesis. Associates with pre-60S subunits in the nucleus and is involved in its nuclear export. Cytoplasmic release of TIF6 from 60S subunits and nuclear relocalization is promoted by a RACK1 (RACK1)-dependent protein kinase C activity. In tissues responsive to insulin, controls fatty acid synthesis and glycolysis by exerting translational control of adipogenic transcription factors such as CEBPB, CEBPD and ATF4 that have G/C rich or uORF in their 5'UTR. Required for ROS-dependent megakaryocyte maturation and platelets formation, controls the expression of mitochondrial respiratory chain genes involved in reactive oxygen species (ROS) synthesis. Involved in miRNA-mediated gene silencing by the RNA-induced silencing complex (RISC). Required for both miRNA-mediated translational repression and miRNA-mediated cleavage of complementary mRNAs by RISC. Modulates cell cycle progression and global translation of pre-B cells, its activation seems to be rate-limiting in tumorigenesis and tumor growth. This is Eukaryotic translation initiation factor 6 from Homo sapiens (Human).